The primary structure comprises 894 residues: UPF0182 protein GSU2333 (894 aa).

The next 7 helical transmembrane spans lie at 6–26 (FLLI…LITF), 50–70 (VGAG…NLYF), 98–118 (MVQM…LLAG), 162–182 (KGFV…VYFF), 203–223 (LAIL…LDAV), 250–270 (ILTL…WKGA), and 275–295 (LIPP…YPAM).

The protein belongs to the UPF0182 family.

It is found in the cell membrane. The sequence is that of UPF0182 protein GSU2333 from Geobacter sulfurreducens (strain ATCC 51573 / DSM 12127 / PCA).